The following is a 602-amino-acid chain: Gag-Pro polyprotein (602 aa).

Gly2 carries the N-myristoyl glycine; by host lipid modification. The PTAP/PSAP motif motif lies at 94–97 (PSAP). Residues 94 to 121 (PSAPAAPVPTPICPTTTPPPPPPPSPEA) are disordered. Positions 97–121 (PAAPVPTPICPTTTPPPPPPPSPEA) are enriched in pro residues. The PPXY motif signature appears at 124–127 (PPPY). 2 CCHC-type zinc fingers span residues 361 to 378 (QPCF…DCTQ) and 384 to 401 (GPCP…DCPQ). The disordered stretch occupies residues 399–425 (CPQLKPPQEEGEPLLLDLPSTSGTTEE). Residues 473–551 (TQALLDTGAD…NKWTIIGRDA (79 aa)) enclose the Peptidase A2 domain. Residue Asp478 is the Protease; shared with dimeric partner of the active site. The interval 582–602 (EHLPPPPQVDQFPLNLSASRP) is disordered.

Homodimer; the homodimers are part of the immature particles. Interacts with human TSG101 and NEDD4; these interactions are essential for budding and release of viral particles. In terms of assembly, homodimer; further assembles as homohexamers. In terms of processing, specific enzymatic cleavages by the viral protease yield mature proteins. The polyprotein is cleaved during and after budding, this process is termed maturation. The protease is autoproteolytically processed at its N- and C-termini. Phosphorylation of the matrix protein p19 by MAPK1 seems to play a role in budding. Post-translationally, myristoylated. Myristoylation of the matrix (MA) domain mediates the transport and binding of Gag polyproteins to the host plasma membrane and is required for the assembly of viral particles.

It is found in the virion. Functionally, the matrix domain targets Gag, Gag-Pro and Gag-Pro-Pol polyproteins to the plasma membrane via a multipartite membrane binding signal, that includes its myristoylated N-terminus. Its function is as follows. Matrix protein. In terms of biological role, forms the spherical core of the virus that encapsulates the genomic RNA-nucleocapsid complex. Binds strongly to viral nucleic acids and promote their aggregation. Also destabilizes the nucleic acids duplexes via highly structured zinc-binding motifs. Functionally, the aspartyl protease mediates proteolytic cleavages of Gag and Gag-Pol polyproteins during or shortly after the release of the virion from the plasma membrane. Cleavages take place as an ordered, step-wise cascade to yield mature proteins. This process is called maturation. Displays maximal activity during the budding process just prior to particle release from the cell (Potential). Cleaves the translation initiation factor eIF4G leading to the inhibition of host cap-dependent translation. The chain is Gag-Pro polyprotein (gag-pro) from Homo sapiens (Human).